We begin with the raw amino-acid sequence, 560 residues long: Probable 2,3-bisphosphoglycerate-independent phosphoglycerate mutase 2 (560 aa).

Gly2 carries the post-translational modification N-acetylglycine. Residues Asp29 and Ser82 each coordinate Mn(2+). Ser82 functions as the Phosphoserine intermediate in the catalytic mechanism. Residues His141, 171–172 (RD), Arg207, Arg214, 287–290 (RADR), and Lys362 contribute to the substrate site. The Mn(2+) site is built by Asp431, His435, Asp472, His473, and His502.

It belongs to the BPG-independent phosphoglycerate mutase family. Monomer. The cofactor is Mn(2+).

It is found in the cytoplasm. It catalyses the reaction (2R)-2-phosphoglycerate = (2R)-3-phosphoglycerate. The protein operates within carbohydrate degradation; glycolysis; pyruvate from D-glyceraldehyde 3-phosphate: step 3/5. Its function is as follows. Catalyzes the interconversion of 2-phosphoglycerate (2-PGA) and 3-phosphoglycerate (3-PGA). Required for guard cell function (e.g. blue light-, abscisic acid- (ABA), and low CO(2)-regulated stomatal movements) and fertility (e.g. pollen grains production). The protein is Probable 2,3-bisphosphoglycerate-independent phosphoglycerate mutase 2 (PGM2) of Arabidopsis thaliana (Mouse-ear cress).